The sequence spans 951 residues: Valine--tRNA ligase (951 aa).

Residues 42–52 (PNVTGSLHMGH) carry the 'HIGH' region motif. The 'KMSKS' region motif lies at 554 to 558 (KMSKS). K557 contacts ATP. The stretch at 880 to 914 (AGLIDKAAELDRLAKEVAKLEAEIGRIESKLSNEG) forms a coiled coil.

Belongs to the class-I aminoacyl-tRNA synthetase family. ValS type 1 subfamily. As to quaternary structure, monomer.

The protein resides in the cytoplasm. The enzyme catalyses tRNA(Val) + L-valine + ATP = L-valyl-tRNA(Val) + AMP + diphosphate. Functionally, catalyzes the attachment of valine to tRNA(Val). As ValRS can inadvertently accommodate and process structurally similar amino acids such as threonine, to avoid such errors, it has a 'posttransfer' editing activity that hydrolyzes mischarged Thr-tRNA(Val) in a tRNA-dependent manner. The chain is Valine--tRNA ligase from Pectobacterium atrosepticum (strain SCRI 1043 / ATCC BAA-672) (Erwinia carotovora subsp. atroseptica).